A 533-amino-acid chain; its full sequence is Flavin-dependent halogenase armH4 (533 aa).

Residues glycine 16, alanine 19, and glutamate 49 each coordinate FAD. Residues serine 337 and glycine 338 each contribute to the chloride site. Valine 339 provides a ligand contact to FAD.

Belongs to the flavin-dependent halogenase family.

The enzyme catalyses melleolide F + FADH2 + chloride + O2 = 6'-chloromelleolide F + FAD + 2 H2O + H(+). It carries out the reaction melleolide F + bromide + FADH2 + O2 = 6'-bromomelleolide F + FAD + 2 H2O. Flavin-dependent halogenase involved in the biosynthesis of melleolides, a range of antifungal and phytotoxic polyketide derivatives composed of an orsellinic acid (OA) moiety esterified to various sesquiterpene alcohols. The halogenase catalyzes the transfer of a single chlorine atom to the melleolide backbone, resulting in a 6'-chloromelleolide product. The enzyme acts on free substrate and does not depend on carrier-protein-dependent acceptor molecules. Can also catalyze the transfer of a single bromine atom to the melleolide backbone in vitro. The sequence is that of Flavin-dependent halogenase armH4 from Armillaria mellea (Honey mushroom).